Reading from the N-terminus, the 381-residue chain is uncharacterized protein (381 aa).

Disordered stretches follow at residues 1 to 20 (MPYY…FDPT) and 36 to 381 (IPPS…EDDE). A compositionally biased stretch (acidic residues) spans 9-18 (NDVDDFDEFD). Composition is skewed to basic and acidic residues over residues 166–175 (TEVEYGRRPE) and 186–237 (SESE…EGYR). Ser-339, Ser-346, and Ser-357 each carry phosphoserine. Residues 364-374 (KKHRHKHHHQK) are compositionally biased toward basic residues.

This is an uncharacterized protein from Arabidopsis thaliana (Mouse-ear cress).